Here is a 404-residue protein sequence, read N- to C-terminus: AT-hook motif nuclear-localized protein 6 (404 aa).

The tract at residues 40-112 (TTVVTPLPPP…TPISSSIPLS (73 aa)) is disordered. A compositionally biased stretch (pro residues) spans 45–55 (PLPPPPAPSSA). Residues 56-70 (PVPTTVTPGSATAST) are compositionally biased toward low complexity. Residues 76–84 (KKKRGRPRK) carry the Bipartite nuclear localization signal motif. The segment at residues 76–88 (KKKRGRPRKYAPD) is a DNA-binding region (a.T hook). Positions 98-112 (PTLSPTPISSSIPLS) are enriched in low complexity. Residues 157-299 (GANFTTHQFT…RVMEAFAPPQ (143 aa)) form the PPC domain. Residues 365–404 (AYHGYGNMNTGTTHKEEHEDEDGGDDDDDSGDTRSQSHSG) are disordered. The span at 382–394 (HEDEDGGDDDDDS) shows a compositional bias: acidic residues.

The protein resides in the nucleus. Its function is as follows. Transcription factor that specifically binds AT-rich DNA sequences related to the nuclear matrix attachment regions (MARs). The chain is AT-hook motif nuclear-localized protein 6 from Arabidopsis thaliana (Mouse-ear cress).